A 360-amino-acid chain; its full sequence is DNA polymerase IV (360 aa).

Residues 9–191 (IMHLDIDAFY…LNINKIPYIG (183 aa)) enclose the UmuC domain. The Mg(2+) site is built by Asp-13 and Asp-108. Glu-109 is a catalytic residue.

It belongs to the DNA polymerase type-Y family. As to quaternary structure, monomer. It depends on Mg(2+) as a cofactor.

The protein localises to the cytoplasm. It carries out the reaction DNA(n) + a 2'-deoxyribonucleoside 5'-triphosphate = DNA(n+1) + diphosphate. Poorly processive, error-prone DNA polymerase involved in untargeted mutagenesis. Copies undamaged DNA at stalled replication forks, which arise in vivo from mismatched or misaligned primer ends. These misaligned primers can be extended by PolIV. Exhibits no 3'-5' exonuclease (proofreading) activity. May be involved in translesional synthesis, in conjunction with the beta clamp from PolIII. The polypeptide is DNA polymerase IV (Ureaplasma parvum serovar 3 (strain ATCC 27815 / 27 / NCTC 11736)).